We begin with the raw amino-acid sequence, 357 residues long: Tetraacyldisaccharide 4'-kinase (357 aa).

49 to 56 (TIGGTGKT) serves as a coordination point for ATP.

The protein belongs to the LpxK family.

It catalyses the reaction a lipid A disaccharide + ATP = a lipid IVA + ADP + H(+). It functions in the pathway glycolipid biosynthesis; lipid IV(A) biosynthesis; lipid IV(A) from (3R)-3-hydroxytetradecanoyl-[acyl-carrier-protein] and UDP-N-acetyl-alpha-D-glucosamine: step 6/6. Functionally, transfers the gamma-phosphate of ATP to the 4'-position of a tetraacyldisaccharide 1-phosphate intermediate (termed DS-1-P) to form tetraacyldisaccharide 1,4'-bis-phosphate (lipid IVA). The protein is Tetraacyldisaccharide 4'-kinase of Porphyromonas gingivalis (strain ATCC 33277 / DSM 20709 / CIP 103683 / JCM 12257 / NCTC 11834 / 2561).